We begin with the raw amino-acid sequence, 45 residues long: CMTICTMEYWPVCGSDGKTYPNKCHLTSTACTSQKDITVLHEGKC.

3 disulfide bridges follow: Cys1–Cys31, Cys5–Cys24, and Cys13–Cys45. The 45-residue stretch at 1-45 folds into the Kazal-like domain; sequence CMTICTMEYWPVCGSDGKTYPNKCHLTSTACTSQKDITVLHEGKC.

Belongs to the conopeptide P-like superfamily. Expressed by the venom duct.

The protein resides in the secreted. Functionally, acts as a neurotoxin by inhibiting an ion channel. May also act as a serine protease inhibitor, since it possess the kazal serine protease inhibitor signature. The chain is Turripeptide OL11-like from Lophiotoma albina (Sea snail).